The sequence spans 217 residues: U exon protein (217 aa).

Disordered regions lie at residues 79–113 (ISGEGNGQSGRGAARNHPRARTRCGATSPNHGGRV) and 171–217 (KEAP…WQRR). Basic residues predominate over residues 188–197 (RGQRGRKRRC). The span at 202–217 (GGFQQPTGANQAWQRR) shows a compositional bias: polar residues.

The protein belongs to the adenoviridae U exon protein family.

It localises to the host nucleus. The protein localises to the host nucleoplasm. It is found in the host nucleolus. Its function is as follows. Might play a role in viral replication since it is associated with viral replication centers. Seems to have an effect on DBP localization. In Human adenovirus C serotype 5 (HAdV-5), this protein is U exon protein.